The following is a 489-amino-acid chain: Bifunctional protein HldE (489 aa).

The ribokinase stretch occupies residues 1–330; the sequence is MFDFDGLSNA…RKILPPAFLA (330 aa). 205-208 is an ATP binding site; sequence NRKE. Residue D275 is part of the active site. The segment at 358 to 489 is cytidylyltransferase; it reads FTNGCFDILH…SLVKRAGGRA (132 aa).

It in the N-terminal section; belongs to the carbohydrate kinase PfkB family. This sequence in the C-terminal section; belongs to the cytidylyltransferase family. As to quaternary structure, homodimer.

It carries out the reaction D-glycero-beta-D-manno-heptose 7-phosphate + ATP = D-glycero-beta-D-manno-heptose 1,7-bisphosphate + ADP + H(+). The enzyme catalyses D-glycero-beta-D-manno-heptose 1-phosphate + ATP + H(+) = ADP-D-glycero-beta-D-manno-heptose + diphosphate. Its pathway is nucleotide-sugar biosynthesis; ADP-L-glycero-beta-D-manno-heptose biosynthesis; ADP-L-glycero-beta-D-manno-heptose from D-glycero-beta-D-manno-heptose 7-phosphate: step 1/4. It participates in nucleotide-sugar biosynthesis; ADP-L-glycero-beta-D-manno-heptose biosynthesis; ADP-L-glycero-beta-D-manno-heptose from D-glycero-beta-D-manno-heptose 7-phosphate: step 3/4. Its function is as follows. Catalyzes the phosphorylation of D-glycero-D-manno-heptose 7-phosphate at the C-1 position to selectively form D-glycero-beta-D-manno-heptose-1,7-bisphosphate. Functionally, catalyzes the ADP transfer from ATP to D-glycero-beta-D-manno-heptose 1-phosphate, yielding ADP-D-glycero-beta-D-manno-heptose. This is Bifunctional protein HldE from Nitrobacter hamburgensis (strain DSM 10229 / NCIMB 13809 / X14).